Consider the following 400-residue polypeptide: Elongation factor Tu (400 aa).

The 200-residue stretch at 10-209 (KPHINIGTIG…AVDDYIPTPE (200 aa)) folds into the tr-type G domain. Residues 19-26 (GHVDHGKT) are G1. 19–26 (GHVDHGKT) is a binding site for GTP. Residue Thr26 coordinates Mg(2+). A G2 region spans residues 60–64 (GITIS). The segment at 81–84 (DCPG) is G3. Residues 81–85 (DCPGH) and 136–139 (NKVD) contribute to the GTP site. Positions 136–139 (NKVD) are G4. Residues 174–176 (SAK) form a G5 region.

Belongs to the TRAFAC class translation factor GTPase superfamily. Classic translation factor GTPase family. EF-Tu/EF-1A subfamily. As to quaternary structure, monomer.

The protein resides in the cytoplasm. The enzyme catalyses GTP + H2O = GDP + phosphate + H(+). Functionally, GTP hydrolase that promotes the GTP-dependent binding of aminoacyl-tRNA to the A-site of ribosomes during protein biosynthesis. The sequence is that of Elongation factor Tu from Herpetosiphon aurantiacus (Herpetosiphon giganteus).